Reading from the N-terminus, the 557-residue chain is Formate--tetrahydrofolate ligase (557 aa).

44 to 51 (TPLGEGKS) provides a ligand contact to ATP.

The protein belongs to the formate--tetrahydrofolate ligase family.

It catalyses the reaction (6S)-5,6,7,8-tetrahydrofolate + formate + ATP = (6R)-10-formyltetrahydrofolate + ADP + phosphate. The protein operates within one-carbon metabolism; tetrahydrofolate interconversion. In Desulfotalea psychrophila (strain LSv54 / DSM 12343), this protein is Formate--tetrahydrofolate ligase.